The sequence spans 852 residues: Envelope glycoprotein gp160 (852 aa).

Residues 1–24 form the signal peptide; it reads MAHVNNYLLVTLLLISIYGYMGKN. The Extracellular portion of the chain corresponds to 25 to 677; it reads FVTVFYGIPA…FTSWMAYIRL (653 aa). N37 carries an N-linked (GlcNAc...) asparagine; by host glycan. A disulfide bond links C44 and C57. N-linked (GlcNAc...) asparagine; by host glycosylation is found at N70, N114, N148, N195, N205, N237, N247, N270, N276, N287, and N298. Intrachain disulfides connect C101-C213, C108-C204, C113-C162, and C236-C248. The V1 stretch occupies residues 113-161; that stretch reads CNKTWSSASKETTTSSASLRSSTQTLLNEDSKCIQNDSCAGIGLEEMID. A V2 region spans residues 162 to 204; the sequence is CQFKMTGLKRDESKQYKDTWYKQDLVCEKGTRSNESKCYIKTC. A V3 region spans residues 303–335; that stretch reads CKRPGNKMVVPIRTVSGILFHSQPINKRPKQAW. C303 and C336 are oxidised to a cystine. Residues N341, N364, N396, N406, N445, N461, and N464 are each glycosylated (N-linked (GlcNAc...) asparagine; by host). 2 disulfides stabilise this stretch: C388/C444 and C395/C417. The interval 395-417 is V4; sequence CNMTFFLNWVENRTGLKRNYASC. Positions 461–467 are V5; the sequence is NLTNITV. The tract at residues 510–530 is fusion peptide; it reads GVLVLGFLGFLATAGSAMGAA. An immunosuppression region spans residues 573 to 589; that stretch reads LQARVTAIEKYLKDQAQ. N609, N618, and N634 each carry an N-linked (GlcNAc...) asparagine; by host glycan. Residues 622-648 adopt a coiled-coil conformation; that stretch reads QQWERQVRFLDANITKLLEEAQIQQEK. The tract at residues 655-676 is MPER; binding to GalCer; sequence KLNQWDIFSNWFDFTSWMAYIR. The chain crosses the membrane as a helical span at residues 678–698; it reads GLYIVIGIVVLRIAIYIIQML. The Cytoplasmic portion of the chain corresponds to 699–852; that stretch reads ARLRKGYRPV…IRQGAELALL (154 aa). Residues 705 to 708 carry the YXXV motif; contains endocytosis signal motif; the sequence is YRPV. Residues 713 to 740 form a disordered region; that stretch reads PSYTQQIPIRKDRGQPANEETEEGGGNN. Residue C771 is the site of S-palmitoyl cysteine; by host attachment. Residues 851 to 852 carry the Di-leucine internalization motif motif; the sequence is LL.

In terms of assembly, the mature envelope protein (Env) consists of a homotrimer of non-covalently associated gp120-gp41 heterodimers. The resulting complex protrudes from the virus surface as a spike. There seems to be as few as 10 spikes on the average virion. Interacts with human CD4, CCR5 and CXCR4, to form a P4HB/PDI-CD4-CXCR4-gp120 complex. Gp120 also interacts with the C-type lectins CD209/DC-SIGN and CLEC4M/DC-SIGNR (collectively referred to as DC-SIGN(R)). Gp120 and gp41 interact with GalCer. The mature envelope protein (Env) consists of a homotrimer of non-covalently associated gp120-gp41 heterodimers. The resulting complex protrudes from the virus surface as a spike. There seems to be as few as 10 spikes on the average virion. In terms of processing, specific enzymatic cleavages in vivo yield mature proteins. Envelope glycoproteins are synthesized as an inactive precursor that is heavily N-glycosylated and processed likely by host cell furin in the Golgi to yield the mature SU and TM proteins. The cleavage site between SU and TM requires the minimal sequence [KR]-X-[KR]-R. Post-translationally, palmitoylation of the transmembrane protein and of Env polyprotein (prior to its proteolytic cleavage) is essential for their association with host cell membrane lipid rafts. Palmitoylation is therefore required for envelope trafficking to classical lipid rafts, but not for viral replication.

It localises to the virion membrane. The protein localises to the host cell membrane. It is found in the host endosome membrane. Functionally, the surface protein gp120 (SU) attaches the virus to the host lymphoid cell by binding to the primary receptor CD4. This interaction induces a structural rearrangement creating a high affinity binding site for a chemokine coreceptor like CXCR4 and/or CCR5. This peculiar 2 stage receptor-interaction strategy allows gp120 to maintain the highly conserved coreceptor-binding site in a cryptic conformation, protected from neutralizing antibodies. Since CD4 also displays a binding site for the disulfide-isomerase P4HB/PDI, a P4HB/PDI-CD4-CXCR4-gp120 complex may form. In that complex, P4HB/PDI could reach and reduce gp120 disulfide bonds, causing major conformational changes in gp120. TXN, another PDI family member could also be involved in disulfide rearrangements in Env during fusion. These changes are transmitted to the transmembrane protein gp41 and are thought to activate its fusogenic potential by unmasking its fusion peptide. The surface protein gp120 is a ligand for CD209/DC-SIGN and CLEC4M/DC-SIGNR, which are respectively found on dendritic cells (DCs), and on endothelial cells of liver sinusoids and lymph node sinuses. These interactions allow capture of viral particles at mucosal surfaces by these cells and subsequent transmission to permissive cells. DCs are professional antigen presenting cells, critical for host immunity by inducing specific immune responses against a broad variety of pathogens. They act as sentinels in various tissues where they take up antigen, process it, and present it to T-cells following migration to lymphoid organs. HIV subverts the migration properties of dendritic cells to gain access to CD4+ T-cells in lymph nodes. Virus transmission to permissive T-cells occurs either in trans (without DCs infection, through viral capture and transmission), or in cis (following DCs productive infection, through the usual CD4-gp120 interaction), thereby inducing a robust infection. In trans infection, bound virions remain infectious over days and it is proposed that they are not degraded, but protected in non-lysosomal acidic organelles within the DCs close to the cell membrane thus contributing to the viral infectious potential during DCs' migration from the periphery to the lymphoid tissues. On arrival at lymphoid tissues, intact virions recycle back to DCs' cell surface allowing virus transmission to CD4+ T-cells. Virion capture also seems to lead to MHC-II-restricted viral antigen presentation, and probably to the activation of HIV-specific CD4+ cells. Its function is as follows. The transmembrane protein gp41 (TM) acts as a class I viral fusion protein. Under the current model, the protein has at least 3 conformational states: pre-fusion native state, pre-hairpin intermediate state, and post-fusion hairpin state. During fusion of viral and target intracellular membranes, the coiled coil regions (heptad repeats) assume a trimer-of-hairpins structure, positioning the fusion peptide in close proximity to the C-terminal region of the ectodomain. The formation of this structure appears to drive apposition and subsequent fusion of viral and target cell membranes. Complete fusion occurs in host cell endosomes and is dynamin-dependent, however some lipid transfer might occur at the plasma membrane. The virus undergoes clathrin-dependent internalization long before endosomal fusion, thus minimizing the surface exposure of conserved viral epitopes during fusion and reducing the efficacy of inhibitors targeting these epitopes. Membranes fusion leads to delivery of the nucleocapsid into the cytoplasm. In terms of biological role, the envelope glycoprotein gp160 precursor down-modulates cell surface CD4 antigen by interacting with it in the endoplasmic reticulum and blocking its transport to the cell surface. Functionally, the gp120-gp41 heterodimer seems to contribute to T-cell depletion during HIV-1 infection. The envelope glycoproteins expressed on the surface of infected cells induce apoptosis through an interaction with uninfected cells expressing the receptor (CD4) and the coreceptors CXCR4 or CCR5. This type of bystander killing may be obtained by at least three distinct mechanisms. First, the interaction between the 2 cells can induce cellular fusion followed by nuclear fusion within the syncytium. Syncytia are condemned to die from apoptosis. Second, the 2 interacting cells may not fuse entirely and simply exchange plasma membrane lipids, after a sort of hemifusion process, followed by rapid death. Third, it is possible that virus-infected cells, on the point of undergoing apoptosis, fuse with CD4-expressing cells, in which case apoptosis is rapidly transmitted from one cell to the other and thus occurs in a sort of contagious fashion. The gp120-gp41 heterodimer allows rapid transcytosis of the virus through CD4 negative cells such as simple epithelial monolayers of the intestinal, rectal and endocervical epithelial barriers. Both gp120 and gp41 specifically recognize glycosphingolipids galactosyl-ceramide (GalCer) or 3' sulfo-galactosyl-ceramide (GalS) present in the lipid rafts structures of epithelial cells. Binding to these alternative receptors allows the rapid transcytosis of the virus through the epithelial cells. This transcytotic vesicle-mediated transport of virions from the apical side to the basolateral side of the epithelial cells does not involve infection of the cells themselves. The chain is Envelope glycoprotein gp160 (env) from Human immunodeficiency virus type 2 subtype B (isolate EHO) (HIV-2).